We begin with the raw amino-acid sequence, 386 residues long: S-adenosylmethionine synthase (386 aa).

Residue His16 participates in ATP binding. Mg(2+) is bound at residue Asp18. Glu44 contributes to the K(+) binding site. L-methionine contacts are provided by Glu57 and Gln100. The segment at 100 to 110 (QSRDITQGVDR) is flexible loop. ATP-binding positions include 165–167 (DAK), Asp240, 246–247 (RK), Ala263, and Lys267. An L-methionine-binding site is contributed by Asp240. Lys271 contacts L-methionine.

It belongs to the AdoMet synthase family. Homotetramer; dimer of dimers. The cofactor is Mg(2+). Requires K(+) as cofactor.

It is found in the cytoplasm. It carries out the reaction L-methionine + ATP + H2O = S-adenosyl-L-methionine + phosphate + diphosphate. The protein operates within amino-acid biosynthesis; S-adenosyl-L-methionine biosynthesis; S-adenosyl-L-methionine from L-methionine: step 1/1. Its function is as follows. Catalyzes the formation of S-adenosylmethionine (AdoMet) from methionine and ATP. The overall synthetic reaction is composed of two sequential steps, AdoMet formation and the subsequent tripolyphosphate hydrolysis which occurs prior to release of AdoMet from the enzyme. The polypeptide is S-adenosylmethionine synthase (Francisella tularensis subsp. tularensis (strain WY96-3418)).